Reading from the N-terminus, the 328-residue chain is Malate dehydrogenase (328 aa).

NAD(+) is bound at residue 11 to 17 (GAAGQIG). Positions 92 and 98 each coordinate substrate. NAD(+) is bound by residues Asn-105, Gln-112, and 129–131 (VGN). Residues Asn-131 and Arg-162 each coordinate substrate. His-187 serves as the catalytic Proton acceptor.

This sequence belongs to the LDH/MDH superfamily. MDH type 2 family.

The catalysed reaction is (S)-malate + NAD(+) = oxaloacetate + NADH + H(+). Catalyzes the reversible oxidation of malate to oxaloacetate. This Coxiella burnetii (strain CbuK_Q154) (Coxiella burnetii (strain Q154)) protein is Malate dehydrogenase.